The primary structure comprises 156 residues: MGKDNKEHKESKESKTVDNYEARMPAVLPFAKPLASKKLNKKVLKTVKKASKAKNVKRGVKEVVKALRKGEKGLVVIAGDISPADVISHIPVLCEDHSVPYIFIPSKQDLGAAGATKRPTSVVFIVPGSNKKKDGKNKEEEYKESFNEVVKEVQAL.

Belongs to the eukaryotic ribosomal protein eL8 family. Component of the small nucleolar ribonucleoprotein particles containing H/ACA-type snoRNAs (H/ACA snoRNPs). The protein component of the H/ACA snoRNP contains CBF5, GAR1, NHP2 and NOP10. The complex contains a stable core composed of CBF5 and NOP10, to which GAR1 and NHP2 subsequently bind. Interacts with SHQ1. Interacts with NAF1.

Its subcellular location is the nucleus. The protein localises to the nucleolus. Non-catalytic component of the H/ACA small nucleolar ribonucleoprotein (H/ACA snoRNP), which catalyzes pseudouridylation of rRNA and is required for ribosome biogenesis. This involves the isomerization of uridine such that the ribose is subsequently attached to C5, instead of the normal N1. Pseudouridine ('psi') residues may serve to stabilize the conformation of rRNAs. The H/ACA snoRNP complex also mediates pseudouridylation of other types of RNAs. The H/ACA snoRNP complex mediates pseudouridylation at position 93 in U2 snRNA. Essential for growth. Directly binds H/ACA snoRNAs. This is H/ACA ribonucleoprotein complex subunit NHP2 (NHP2) from Saccharomyces cerevisiae (strain ATCC 204508 / S288c) (Baker's yeast).